A 410-amino-acid chain; its full sequence is Regulator of microtubule dynamics protein 2 (410 aa).

Residues isoleucine 10–tyrosine 27 traverse the membrane as a helical segment. Residues arginine 71–glycine 109 are a coiled coil. At serine 121 the chain carries Phosphoserine. Over residues proline 122–leucine 131 the composition is skewed to basic residues. A disordered region spans residues proline 122–valine 153. A Phosphothreonine modification is found at threonine 139. Residue tyrosine 152 is modified to Phosphotyrosine. A phosphothreonine mark is found at threonine 154 and threonine 157.

This sequence belongs to the RMDN family. In terms of assembly, interacts with microtubules.

It localises to the membrane. It is found in the cytoplasm. The protein localises to the cytoskeleton. Its subcellular location is the spindle. The protein resides in the spindle pole. This is Regulator of microtubule dynamics protein 2 (RMDN2) from Bos taurus (Bovine).